Reading from the N-terminus, the 366-residue chain is Rab9 effector protein with kelch motifs (366 aa).

Kelch repeat units lie at residues 49-95 (KILI…FISA), 100-146 (NIWV…TSSA), 151-200 (KLYV…VLTA), 204-253 (KLFV…AWKS), 254-303 (YIYI…LLPW), and 343-366 (LCFI…TILQ).

Rab9 effector required for endosome to trans-Golgi network (TGN) transport. The chain is Rab9 effector protein with kelch motifs (rabepk) from Xenopus laevis (African clawed frog).